A 317-amino-acid polypeptide reads, in one-letter code: Glucose-6-phosphate isomerase, cytosolic 2B (317 aa).

Glutamate 108 functions as the Proton donor in the catalytic mechanism. Residues histidine 139 and lysine 264 contribute to the active site.

The protein belongs to the GPI family. In terms of assembly, homodimer.

The protein localises to the cytoplasm. The catalysed reaction is alpha-D-glucose 6-phosphate = beta-D-fructose 6-phosphate. Its pathway is carbohydrate degradation; glycolysis; D-glyceraldehyde 3-phosphate and glycerone phosphate from D-glucose: step 2/4. The sequence is that of Glucose-6-phosphate isomerase, cytosolic 2B (PGIC2-B) from Clarkia lewisii (Farewell-to-spring).